The sequence spans 683 residues: Rhophilin-2-B (683 aa).

The region spanning 25 to 99 (KSIAQTGRSK…LERLNISVEV (75 aa)) is the REM-1 domain. The 392-residue stretch at 110 to 501 (PLIPLGLKET…TDIFQRLGPL (392 aa)) folds into the BRO1 domain. The 78-residue stretch at 515–592 (KMCITKEDGD…DSIEIQVISI (78 aa)) folds into the PDZ domain.

The protein belongs to the RHPN family. As to quaternary structure, interacts with RhoA.

The protein resides in the cytoplasm. Its subcellular location is the perinuclear region. In terms of biological role, binds specifically to GTP-Rho. This chain is Rhophilin-2-B (rhpn2-b), found in Xenopus laevis (African clawed frog).